The sequence spans 1628 residues: Centrosomal protein of 170 kDa protein B (1628 aa).

In terms of domain architecture, FHA spans 23-73 (IFVGREDCELMLQSRSVDKQHAVINYDSDKDEHRVKDLGSLNGTFVNDVRI). Disordered regions lie at residues 136–201 (EHGA…DMTQ), 329–369 (LIRR…SEDP), 415–504 (PRKK…GKNY), 566–586 (SDVR…DAGT), 637–659 (LASE…KLSN), 719–739 (EHQG…LPQL), 758–842 (ESQR…KKST), 1005–1084 (VSLV…LDFT), 1100–1341 (TVSS…EDEQ), 1379–1405 (AGDG…TPAS), 1443–1463 (GSTG…DPSK), and 1560–1628 (HLDV…TYIV). Composition is skewed to basic and acidic residues over residues 147-156 (KQDKADKKAT) and 180-201 (KLDK…DMTQ). Over residues 421–434 (QSFTHNANSPQNDT) the composition is skewed to polar residues. The segment covering 436 to 453 (PVLKAKAEKRKGTLHVEK) has biased composition (basic and acidic residues). Positions 454–479 (VSTNGMGSTAPASKSLSSPSFPQRSN) are enriched in polar residues. The span at 481–490 (FRREKTEDRI) shows a compositional bias: basic and acidic residues. Basic and acidic residues-rich tracts occupy residues 758–773 (ESQR…RISE) and 817–828 (WKGEESHSREPS). Positions 1005–1023 (VSLVSDKNVPSHSQKNRIV) are enriched in polar residues. Over residues 1045–1056 (ARERLSEKRRTV) the composition is skewed to basic and acidic residues. The span at 1129–1150 (RSSNAQKVQQALTRSNSLSTPR) shows a compositional bias: polar residues. The span at 1176-1193 (SNISPGTSSANSSSAKSS) shows a compositional bias: low complexity. The span at 1216–1227 (NVPSDSETTSSV) shows a compositional bias: polar residues. 3 stretches are compositionally biased toward low complexity: residues 1261–1280 (TQKQ…SSST), 1312–1328 (ASTA…SRRQ), and 1381–1398 (DGDS…SISS). Over residues 1564–1596 (PSSNKKTSSTILTSNPLSRTTNNSAARTESQTP) the composition is skewed to polar residues. The span at 1606-1618 (SSSSSSRSPGSSF) shows a compositional bias: low complexity.

The protein belongs to the CEP170 family.

The protein resides in the cytoplasm. It is found in the cytoskeleton. Functionally, plays a role in microtubule organization. In Xenopus tropicalis (Western clawed frog), this protein is Centrosomal protein of 170 kDa protein B (cep170b).